The chain runs to 372 residues: MVFPWRCQSAQRGSWSFLKLWIRTLLCCDLLPHHGTHCWTYHYSERSMNWENARKFCKHNYTDLVAIQNKREIEYLEKTLPKNPTYYWIGIRKIGKTWTWVGTNKTLTKEAENWGTGEPNNKKSKEDCVEIYIKRERDSGKWNDDACHKRKAALCYTASCQPESCNRHGECVETINNNTCICDPGYYGPQCQYVIQCEPLKAPELGTMNCIHPLGDFSFQSQCAFNCSEGSELLGNAKTECGASGNWTYLEPICQVIQCMPLAAPDLGTMECSHPLANFSFTSACTFTCSEETDLIGERKTVCRSSGSWSSPSPICQKTKRSFSKIKEGDYNPLFIPVAVMVTAFSGLAFIIWLARRLKKGKKSQERMDDPY.

Residues 1-28 (MVFPWRCQSAQRGSWSFLKLWIRTLLCC) form the signal peptide. A propeptide spanning residues 29 to 38 (DLLPHHGTHC) is cleaved from the precursor. Residues 39-332 (WTYHYSERSM…FSKIKEGDYN (294 aa)) lie on the Extracellular side of the membrane. Residues 55-155 (KFCKHNYTDL…ACHKRKAALC (101 aa)) enclose the C-type lectin domain. 10 disulfide bridges follow: cysteine 57/cysteine 155, cysteine 128/cysteine 147, cysteine 128/cysteine 160, cysteine 160/cysteine 171, cysteine 165/cysteine 180, cysteine 182/cysteine 191, cysteine 197/cysteine 241, cysteine 227/cysteine 254, cysteine 259/cysteine 303, and cysteine 289/cysteine 316. N-linked (GlcNAc...) asparagine glycosylation is found at asparagine 60 and asparagine 104. The Ca(2+) site is built by glutamate 118, asparagine 120, glutamate 126, asparagine 143, and aspartate 144. The 37-residue stretch at 156–192 (YTASCQPESCNRHGECVETINNNTCICDPGYYGPQCQ) folds into the EGF-like domain. N-linked (GlcNAc...) asparagine glycosylation is present at asparagine 177. Sushi domains are found at residues 195–256 (IQCE…ICQV) and 257–318 (IQCM…ICQK). 3 N-linked (GlcNAc...) asparagine glycosylation sites follow: asparagine 226, asparagine 246, and asparagine 278. Residues 333-355 (PLFIPVAVMVTAFSGLAFIIWLA) form a helical membrane-spanning segment. Residues 356–372 (RRLKKGKKSQERMDDPY) lie on the Cytoplasmic side of the membrane.

Belongs to the selectin/LECAM family. Interaction with SELPLG/PSGL1 and PODXL2 is required for promoting recruitment and rolling of leukocytes. This interaction is dependent on the sialyl Lewis X glycan modification of SELPLG and PODXL2, and tyrosine sulfation modifications of SELPLG. Sulfation on 'Tyr-51' of SELPLG is important for L-selectin binding. In terms of processing, N-glycosylated. In terms of tissue distribution, expressed in peripheral blood mononuclear cells (PBMC), spleen and thymus.

Its subcellular location is the cell membrane. In terms of biological role, calcium-dependent lectin that mediates cell adhesion by binding to glycoproteins on neighboring cells. Mediates the adherence of lymphocytes to endothelial cells of high endothelial venules in peripheral lymph nodes. Promotes initial tethering and rolling of leukocytes in endothelia. This is L-selectin (Sell) from Rattus norvegicus (Rat).